The chain runs to 208 residues: Methyl-CpG-binding domain protein 3-like 2 (208 aa).

The segment at 1 to 89 is interacts with MBD3; sequence MGEPAFTSFP…HLEKPQQLCA (89 aa).

It belongs to the MBD3L family. In terms of assembly, interacts (via N-terminus) with MBD3; the interaction is direct. Interacts with MTA1. Interacts with HDAC1. Interacts with HDAC2. Interacts with RBBP4. Interacts with RBBP7. Detected at low levels in several somatic tissues. Highly expressed in the ovarian teratocarcinoma cell line PA-1.

It is found in the nucleus. May displace the NuRD complex from chromatin. This is Methyl-CpG-binding domain protein 3-like 2 (MBD3L2) from Homo sapiens (Human).